An 802-amino-acid chain; its full sequence is MANTKKTTLDITGMTCAACSNRIEKKLNKLDDVNAQVNLTTEKATVEYNPDQHDVQEFINTIQHLGYGVTVETVELDITGMTCAACSSRIEKVLNKMNGVQNATVNLTTEQAKVDYYPEETDADKLVTRIQKLGYDASIKDNNKDQTSRKAEALQHKLIKLIISAVLSLPLLMLMFVHLFNMHIPALFTNPWFQFILATPVQFIIGWQFYVGAYKNLRNGGANMDVLVAVGTSAAYFYSIYEMVRWLNGSTTQPHLYFETSAVLLTLILFGKYLEARAKSQTTNALGELLSLQAKEARILKDGNEVMIPLNEVHVGDTLIVKPGEKIPVDGKIIKGMTAIDESMLTGESIPVEKNVDDTVIGSTMNKNGTITMTATKVGGDTALANIIKVVEEAQSSKAPIQRLADIISGYFVPIVVGIALLIFIVWITLVTPGTFEPALVASISVLVIACPCALGLATPTSIMVGTGRAAENGILFKGGEFVERTHQIDTIVLDKTGTITNGRPVVTDYHGDNQTLQLLATAEKDSEHPLAEAIVNYAKEKQLTLTETTTFKAVPGHGIEATIDHHHILVGNRKLMADNDISLPKHISDDLTHYERDGKTAMLIAVNYSLTGIIAVADTVKDHAKDAIKQLHDMGIEVAMLTGDNKNTAQAIAKQVGIDTVIADILPEEKAAQIAKLQQQGKKVAMVGDGVNDAPALVKADIGIAIGTGTEVAIEAADITILGGDLMLIPKAIYASKATIRNIRQNLFWAFGYNIAGIPIAALGLLAPWVAGAAMALSSVSVVTNALRLKKMRLEPRRKDA.

HMA domains are found at residues 5–70 (KKTT…YGVT) and 72–138 (ETVE…YDAS). 4 residues coordinate Cu(+): C16, C19, C83, and C86. A run of 6 helical transmembrane segments spans residues 161–181 (LIIS…HLFN), 192–212 (WFQF…FYVG), 224–244 (MDVL…YEMV), 256–276 (LYFE…YLEA), 411–431 (YFVP…ITLV), and 438–458 (PALV…LGLA). Catalysis depends on D495, which acts as the 4-aspartylphosphate intermediate. Mg(2+)-binding residues include D690 and D694. The next 2 membrane-spanning stretches (helical) occupy residues 748-767 (LFWA…LGLL) and 771-790 (VAGA…ALRL).

It belongs to the cation transport ATPase (P-type) (TC 3.A.3) family. Type IB subfamily.

Its subcellular location is the cell membrane. It catalyses the reaction Cu(+)(in) + ATP + H2O = Cu(+)(out) + ADP + phosphate + H(+). Involved in copper export. This Staphylococcus aureus (strain N315) protein is Copper-exporting P-type ATPase (copA).